Reading from the N-terminus, the 78-residue chain is Probable Fe(2+)-trafficking protein (78 aa).

The protein belongs to the Fe(2+)-trafficking protein family. As to quaternary structure, monomer.

In terms of biological role, could be a mediator in iron transactions between iron acquisition and iron-requiring processes, such as synthesis and/or repair of Fe-S clusters in biosynthetic enzymes. This is Probable Fe(2+)-trafficking protein from Wigglesworthia glossinidia brevipalpis.